Consider the following 178-residue polypeptide: Interleukin-10 (178 aa).

The N-terminal stretch at 1 to 18 (MHSSALLCCLVFLTGVRA) is a signal peptide. Disulfide bonds link Cys-30/Cys-126 and Cys-80/Cys-132. Asn-134 carries N-linked (GlcNAc...) asparagine glycosylation.

Belongs to the IL-10 family. In terms of assembly, homodimer. Interacts with IL10RA and IL10RB.

Its subcellular location is the secreted. Its function is as follows. Major immune regulatory cytokine that acts on many cells of the immune system where it has profound anti-inflammatory functions, limiting excessive tissue disruption caused by inflammation. Mechanistically, IL10 binds to its heterotetrameric receptor comprising IL10RA and IL10RB leading to JAK1 and STAT2-mediated phosphorylation of STAT3. In turn, STAT3 translocates to the nucleus where it drives expression of anti-inflammatory mediators. Targets antigen-presenting cells (APCs) such as macrophages and monocytes and inhibits their release of pro-inflammatory cytokines including granulocyte-macrophage colony-stimulating factor /GM-CSF, granulocyte colony-stimulating factor/G-CSF, IL-1 alpha, IL-1 beta, IL-6, IL-8 and TNF-alpha. Also interferes with antigen presentation by reducing the expression of MHC-class II and co-stimulatory molecules, thereby inhibiting their ability to induce T cell activation. In addition, controls the inflammatory response of macrophages by reprogramming essential metabolic pathways including mTOR signaling. The protein is Interleukin-10 (IL10) of Callithrix jacchus (White-tufted-ear marmoset).